The chain runs to 484 residues: UDP-N-acetylmuramoyl-L-alanyl-D-glutamate--L-lysine ligase (484 aa).

Serine 43 contacts UDP-N-acetyl-alpha-D-muramoyl-L-alanyl-D-glutamate. Residue 119-125 (GTKGKTT) participates in ATP binding. UDP-N-acetyl-alpha-D-muramoyl-L-alanyl-D-glutamate contacts are provided by residues 161–162 (TT), serine 188, and arginine 196. At lysine 230 the chain carries N6-carboxylysine. The short motif at 405-408 (DDPN) is the L-lysine recognition motif element.

This sequence belongs to the MurCDEF family. MurE subfamily. Post-translationally, carboxylation is probably crucial for Mg(2+) binding and, consequently, for the gamma-phosphate positioning of ATP.

It is found in the cytoplasm. It catalyses the reaction UDP-N-acetyl-alpha-D-muramoyl-L-alanyl-D-glutamate + L-lysine + ATP = UDP-N-acetyl-alpha-D-muramoyl-L-alanyl-gamma-D-glutamyl-L-lysine + ADP + phosphate + H(+). It functions in the pathway cell wall biogenesis; peptidoglycan biosynthesis. Its function is as follows. Catalyzes the addition of L-lysine to the nucleotide precursor UDP-N-acetylmuramoyl-L-alanyl-D-glutamate (UMAG) in the biosynthesis of bacterial cell-wall peptidoglycan. The sequence is that of UDP-N-acetylmuramoyl-L-alanyl-D-glutamate--L-lysine ligase from Streptococcus agalactiae serotype V (strain ATCC BAA-611 / 2603 V/R).